Here is a 211-residue protein sequence, read N- to C-terminus: Interleukin-6 (211 aa).

The N-terminal stretch at M1–A25 is a signal peptide. A disulfide bridge connects residues C71 and C77. The residue at position 80 (S80) is a Phosphoserine. Cysteines 100 and 110 form a disulfide.

Belongs to the IL-6 superfamily. In terms of assembly, component of a hexamer of two molecules each of IL6, IL6R and IL6ST; first binds to IL6R to associate with the signaling subunit IL6ST. Interacts with IL6R (via the N-terminal ectodomain); this interaction may be affected by IL6R-binding with SORL1, hence decreasing IL6 cis signaling. Interacts with SORL1 (via the N-terminal ectodomain); this interaction leads to IL6 internalization and lysosomal degradation. May form a trimeric complex with the soluble SORL1 ectodomain and soluble IL6R receptor; this interaction might stabilize circulating IL6, hence promoting IL6 trans signaling.

The protein resides in the secreted. Cytokine with a wide variety of biological functions in immunity, tissue regeneration, and metabolism. Binds to IL6R, then the complex associates to the signaling subunit IL6ST/gp130 to trigger the intracellular IL6-signaling pathway. The interaction with the membrane-bound IL6R and IL6ST stimulates 'classic signaling', whereas the binding of IL6 and soluble IL6R to IL6ST stimulates 'trans-signaling'. Alternatively, 'cluster signaling' occurs when membrane-bound IL6:IL6R complexes on transmitter cells activate IL6ST receptors on neighboring receiver cells. Functionally, IL6 is a potent inducer of the acute phase response. Rapid production of IL6 contributes to host defense during infection and tissue injury, but excessive IL6 synthesis is involved in disease pathology. In the innate immune response, is synthesized by myeloid cells, such as macrophages and dendritic cells, upon recognition of pathogens through toll-like receptors (TLRs) at the site of infection or tissue injury. In the adaptive immune response, is required for the differentiation of B cells into immunoglobulin-secreting cells. Plays a major role in the differentiation of CD4(+) T cell subsets. Essential factor for the development of T follicular helper (Tfh) cells that are required for the induction of germinal-center formation. Required to drive naive CD4(+) T cells to the Th17 lineage. Also required for proliferation of myeloma cells and the survival of plasmablast cells. Its function is as follows. Acts as an essential factor in bone homeostasis and on vessels directly or indirectly by induction of VEGF, resulting in increased angiogenesis activity and vascular permeability. Induces, through 'trans-signaling' and synergistically with IL1B and TNF, the production of VEGF. Involved in metabolic controls, is discharged into the bloodstream after muscle contraction increasing lipolysis and improving insulin resistance. 'Trans-signaling' in central nervous system also regulates energy and glucose homeostasis. Mediates, through GLP-1, crosstalk between insulin-sensitive tissues, intestinal L cells and pancreatic islets to adapt to changes in insulin demand. Also acts as a myokine. Plays a protective role during liver injury, being required for maintenance of tissue regeneration. Also has a pivotal role in iron metabolism by regulating HAMP/hepcidin expression upon inflammation or bacterial infection. Through activation of IL6ST-YAP-NOTCH pathway, induces inflammation-induced epithelial regeneration. The protein is Interleukin-6 (IL6) of Lama glama (Llama).